The chain runs to 438 residues: Malic acid transport protein (438 aa).

10 helical membrane-spanning segments follow: residues 37–57, 65–85, 106–126, 140–160, 172–192, 205–225, 242–262, 288–308, 321–341, and 353–373; these read SWFA…SFPF, IGKI…SCML, LFIA…AIYA, ILYY…FFTI, SPAW…AGAV, VIFG…LFAV, PGMF…INIA, FMAI…MVSF, ACGW…TIEI, and FGHI…YLMV. The interval 390 to 438 is disordered; that stretch reads AHPPPKPNTGVLNPTFPPEKAPASLEKVDTHVTSTGGESDPPSSEHESV. Phosphoserine occurs at positions 413, 423, 428, 432, 433, and 437.

It belongs to the tellurite-resistance/dicarboxylate transporter (TDT) family.

Its subcellular location is the membrane. Functionally, permease for malate and other C4 dicarboxylic acids. This Schizosaccharomyces pombe (strain 972 / ATCC 24843) (Fission yeast) protein is Malic acid transport protein (mae1).